The sequence spans 433 residues: Divergent protein kinase domain 2B (433 aa).

Positions 1–31 are cleaved as a signal peptide; that stretch reads MEPQLGPEAAALRPGWLALLLWVSALSCSFS. N-linked (GlcNAc...) asparagine glycosylation occurs at Asn-100.

The protein belongs to the DIPK family.

The protein localises to the secreted. This chain is Divergent protein kinase domain 2B, found in Homo sapiens (Human).